The primary structure comprises 560 residues: Membrane protein insertase YidC (560 aa).

6 helical membrane-spanning segments follow: residues 5–25 (IINL…WQYF), 334–354 (AIDF…MNFF), 357–377 (YVGN…LLMF), 431–451 (LPIL…YVTI), 476–496 (LFGL…WPIL), and 522–542 (FMPL…LIYW).

Belongs to the OXA1/ALB3/YidC family. Type 1 subfamily. As to quaternary structure, interacts with the Sec translocase complex via SecD. Specifically interacts with transmembrane segments of nascent integral membrane proteins during membrane integration.

Its subcellular location is the cell inner membrane. In terms of biological role, required for the insertion and/or proper folding and/or complex formation of integral membrane proteins into the membrane. Involved in integration of membrane proteins that insert both dependently and independently of the Sec translocase complex, as well as at least some lipoproteins. Aids folding of multispanning membrane proteins. This is Membrane protein insertase YidC from Rickettsia felis (strain ATCC VR-1525 / URRWXCal2) (Rickettsia azadi).